The sequence spans 898 residues: Sodium/hydrogen exchanger 5 (898 aa).

Residues 1 to 48 (MLSAALLLLPGLPLAGAGATEEPTQESGPLGEPPPGLALFRWQWHEVE) lie on the Cytoplasmic side of the membrane. The helical transmembrane segment at 49–69 (APYLVALWILVASLAKIVFHL) threads the bilayer. At 70–76 (SRKVTSL) the chain is on the extracellular side. Residues 77 to 97 (VPESCLLILLGLVLGGIVLAV) form a helical membrane-spanning segment. Over 98–106 (AKKAEYQLE) the chain is Cytoplasmic. The chain crosses the membrane as a helical span at residues 107–127 (PGTFFLFLLPPIVLDSGYFMP). Residues 128 to 137 (SRLFFDNLGA) lie on the Extracellular side of the membrane. Residues 138 to 158 (ILTYAVVGTLWNAFTTGVALW) form a helical membrane-spanning segment. The Cytoplasmic portion of the chain corresponds to 159-176 (GLQQAGLVAPRVQAGLLD). A helical transmembrane segment spans residues 177 to 197 (FLLFGSLISAVDPVAVLAVFE). The Extracellular portion of the chain corresponds to 198 to 203 (EVHVNQ). The helical transmembrane segment at 204–224 (TLFIIIFGESLLNDAVTVVLY) threads the bilayer. Residues 225–249 (KVCNSFVEMGSANVQATDYLKGVAS) lie on the Cytoplasmic side of the membrane. Residues 250-270 (LFVVSLGGAAVGLVFAFLLAL) traverse the membrane as a helical segment. Residues 271-279 (TTRFTKRVR) lie on the Extracellular side of the membrane. The chain crosses the membrane as a helical span at residues 280 to 300 (IIEPLLVFLLAYAAYLTAEMA). Residues 301–334 (SLSAILAVTMCGLGCKKYVEANISHKSRTAVKYT) are Cytoplasmic-facing. Residues 335 to 355 (MKTLASCAETVIFMLLGISAV) traverse the membrane as a helical segment. The Extracellular segment spans residues 356–363 (DSSKWAWD). A helical transmembrane segment spans residues 364–384 (SGLVLGTLFFILFFRALGVVL). Residues 385-401 (QTWALNQFRLVPLDKID) are Cytoplasmic-facing. The chain crosses the membrane as a helical span at residues 402–422 (QVVMSYGGLRGAVAFALVILL). Residues 423–431 (DRTKVPAKD) are Extracellular-facing. Residues 432–452 (YFVATTIVVVFFTVIVQGLTI) traverse the membrane as a helical segment. At 453-898 (KPLVKWLRVK…CIQFNRGGRL (446 aa)) the chain is on the cytoplasmic side. 2 disordered regions span residues 660–693 (FTKS…RDLG) and 826–866 (EEPQ…PQQE). Basic residues predominate over residues 663-675 (SKPRPRKTSHKKK). Residues 857–866 (ESSADIPQQE) show a composition bias toward polar residues.

It belongs to the monovalent cation:proton antiporter 1 (CPA1) transporter (TC 2.A.36) family. In terms of assembly, interacts with CHP1 and CHP2. Interacts with ARRB2; facilitates the endocytosis of SLC9A5 from the plasma membrane. Interacts with RACK1; this interaction positively regulates SLC9A5 activity and promote SLC9A5 localization to focal adhesions. Interacts with SCAMP2; this interaction regulates SLC9A5 cell-surface targeting and SLC9A5 activity. In terms of processing, phosphorylated by PRKAA2; promotes its accumulation at the cell surface. Phosphorylated by CSNK2A1 in a manner favoring its beta-arrestin binding and endocytosis. Highest expression level is detected in brain. Expressed in hippocampal neurons (at protein level).

It localises to the cell membrane. The protein localises to the recycling endosome membrane. The protein resides in the cell projection. Its subcellular location is the dendritic spine membrane. It is found in the synaptic cell membrane. It localises to the cell junction. The protein localises to the focal adhesion. It carries out the reaction Na(+)(in) + H(+)(out) = Na(+)(out) + H(+)(in). Its function is as follows. Plasma membrane Na(+)/H(+) antiporter. Mediates the electroneutral exchange of intracellular H(+) ions for extracellular Na(+) in 1:1 stoichiometry. Responsible for regulating intracellular pH homeostasis, in particular in neural tissues. Acts as a negative regulator of dendritic spine growth. Plays a role in postsynaptic remodeling and signaling. Can also contribute to organellar pH regulation, with consequences for receptor tyrosine kinase trafficking. This chain is Sodium/hydrogen exchanger 5 (Slc9a5), found in Mus musculus (Mouse).